The chain runs to 206 residues: Uridine kinase (206 aa).

11-18 is an ATP binding site; that stretch reads GGSASGKT.

The protein belongs to the uridine kinase family.

It is found in the cytoplasm. The enzyme catalyses uridine + ATP = UMP + ADP + H(+). It carries out the reaction cytidine + ATP = CMP + ADP + H(+). The protein operates within pyrimidine metabolism; CTP biosynthesis via salvage pathway; CTP from cytidine: step 1/3. It participates in pyrimidine metabolism; UMP biosynthesis via salvage pathway; UMP from uridine: step 1/1. The chain is Uridine kinase from Lactococcus lactis subsp. cremoris (strain MG1363).